The sequence spans 151 residues: HTH-type transcriptional regulator TcaR (151 aa).

Positions 1-142 (MVKHLQDHIQ…VRQVLEVINH (142 aa)) constitute an HTH marR-type domain. Positions 54-77 (ISEITQRQGVNKAAVSRRIKKLID) form a DNA-binding region, H-T-H motif.

Its function is as follows. Involved in the antibiotic teicoplanin susceptibility. Inactivation of the tcaRAB operon leads to teicoplanin resistance. In terms of biological role, is a weak negative regulator of transcription of the icaABD operon. This chain is HTH-type transcriptional regulator TcaR (tcaR), found in Staphylococcus aureus (strain COL).